The chain runs to 465 residues: UDP-glycosyltransferase TURAN (465 aa).

Topologically, residues 1 to 75 are cytoplasmic; sequence MGKRGRACVV…FIQYFPKILY (75 aa). Residues 76–96 form a helical membrane-spanning segment; the sequence is PVTLLLKAFIQFTMLLWFLFV. Residues 97 to 465 lie on the Lumenal side of the membrane; the sequence is KVPAPDIFLV…TQVVSQIADS (369 aa). A glycan (N-linked (GlcNAc...) asparagine) is linked at asparagine 238.

Belongs to the glycosyltransferase group 1 family. Glycosyltransferase 33 subfamily.

The protein resides in the endoplasmic reticulum membrane. The protein operates within protein modification; protein glycosylation. Functionally, required for pollen tube (PT) growth and integrity by affecting the stability of the pollen-specific ANX1 and ANX2 proteins. Involved in protein N-glycosylation in the endoplasmic reticulum (ER), especially in the female gametophyte. Mediates PT reception in synergids through protein glycosylation. The protein is UDP-glycosyltransferase TURAN of Arabidopsis thaliana (Mouse-ear cress).